The sequence spans 302 residues: Succinate--CoA ligase [ADP-forming] subunit alpha (302 aa).

CoA contacts are provided by residues 17-20, Lys43, and 96-98; these read TGST and ITE. Tyr159 contacts substrate. The active-site Tele-phosphohistidine intermediate is the His247.

It belongs to the succinate/malate CoA ligase alpha subunit family. Heterotetramer of two alpha and two beta subunits.

The catalysed reaction is succinate + ATP + CoA = succinyl-CoA + ADP + phosphate. It carries out the reaction GTP + succinate + CoA = succinyl-CoA + GDP + phosphate. The protein operates within carbohydrate metabolism; tricarboxylic acid cycle; succinate from succinyl-CoA (ligase route): step 1/1. Its function is as follows. Succinyl-CoA synthetase functions in the citric acid cycle (TCA), coupling the hydrolysis of succinyl-CoA to the synthesis of either ATP or GTP and thus represents the only step of substrate-level phosphorylation in the TCA. The alpha subunit of the enzyme binds the substrates coenzyme A and phosphate, while succinate binding and nucleotide specificity is provided by the beta subunit. This chain is Succinate--CoA ligase [ADP-forming] subunit alpha, found in Staphylococcus aureus (strain MSSA476).